Here is a 307-residue protein sequence, read N- to C-terminus: D-alanine--D-alanine ligase (307 aa).

The region spanning 110 to 299 is the ATP-grasp domain; that stretch reads KQLWKGAGLP…FDVLVGEILL (190 aa). 136–185 contacts ATP; that stretch reads PVIVKPAHEGSSIGMAKADNTEELGEALVAAEKFDQDVLVEAWVNGPEYT. Asp253, Glu266, and Asn268 together coordinate Mg(2+).

The protein belongs to the D-alanine--D-alanine ligase family. Requires Mg(2+) as cofactor. Mn(2+) serves as cofactor.

Its subcellular location is the cytoplasm. It carries out the reaction 2 D-alanine + ATP = D-alanyl-D-alanine + ADP + phosphate + H(+). Its pathway is cell wall biogenesis; peptidoglycan biosynthesis. Cell wall formation. The chain is D-alanine--D-alanine ligase from Alcanivorax borkumensis (strain ATCC 700651 / DSM 11573 / NCIMB 13689 / SK2).